We begin with the raw amino-acid sequence, 559 residues long: Cytoplasmic polyadenylation element-binding protein 1 (559 aa).

The segment at 222-243 (SRMDHSSSPLTPPPSASPSGSL) is disordered. RRM domains are found at residues 304–401 (CKVF…DAQV) and 423–504 (NTVF…PYLE). Zn(2+) contacts are provided by cysteine 508, cysteine 511, cysteine 520, cysteine 525, cysteine 530, cysteine 533, histidine 538, and histidine 546.

Belongs to the RRM CPEB family. In terms of tissue distribution, expressed in oocytes (at protein level). During oocyte maturation becomes detectable at stage Ib, and remains ubiquitously distributed within the oocyte cytoplasm until stage II. It then follows a gradual accumulation to the future animal pole during stage III, and remains localized to this pole at stage IV (at protein level). Expressed in oocytes, blastomeres and pre-mid-blastula transition embryos. Its expression during oogenesis is ubiquitous at stages I and II, but gradually accumulated at the periphery of the oocyte in the presumptive animal pole during stage III. Expression was maintained in that region at stage IV, and then became delocalized at stage V to cover a much broader area presumably encompassing the future blastodisc.

Its subcellular location is the cytoplasm. Sequence-specific RNA-binding protein that regulates mRNA cytoplasmic polyadenylation and translation initiation during oocyte maturation and early development. Binds to the cytoplasmic polyadenylation element (CPE), an uridine-rich sequence element (consensus sequence 5'-UUUUUAU-3') within the mRNA 3'-UTR. This is Cytoplasmic polyadenylation element-binding protein 1 (cpeb1) from Danio rerio (Zebrafish).